Here is a 1140-residue protein sequence, read N- to C-terminus: uncharacterized protein (1140 aa).

7 disordered regions span residues 1-49 (MGSS…TSPE), 97-243 (SSDI…STIS), 280-427 (TSSS…KSSV), 512-541 (ASST…DLSK), 702-747 (FSTP…STAS), 916-1059 (CPEK…PIGR), and 1080-1103 (LSSS…GTSS). The segment covering 105 to 129 (VNDVESSTSGPSNSYSALSSTNAQL) has biased composition (polar residues). Low complexity-rich tracts occupy residues 130 to 154 (SSST…TSSS), 172 to 214 (TTAS…TTSD), and 221 to 243 (SSST…STIS). Polar residues predominate over residues 516–528 (LGSKVSSSNSRMA). Low complexity-rich tracts occupy residues 529–541 (TSKT…DLSK) and 703–718 (STPE…VTSE). Residues 719 to 733 (APSTVSSMTTSAPFI) show a composition bias toward polar residues. Low complexity predominate over residues 734–747 (NNSTSARPSPSTAS). Residues 949-961 (SFKDMKTSQETKK) show a composition bias toward basic and acidic residues. The segment covering 977-997 (EKTSPTTKASPSTSPSESKAA) has biased composition (low complexity). Polar residues-rich tracts occupy residues 998-1023 (GNTS…STSV), 1031-1055 (TKNS…STES), and 1089-1103 (RSTT…GTSS).

This is an uncharacterized protein from Saccharomyces cerevisiae (strain ATCC 204508 / S288c) (Baker's yeast).